Here is an 89-residue protein sequence, read N- to C-terminus: Small ribosomal subunit protein uS15 (89 aa).

Belongs to the universal ribosomal protein uS15 family. In terms of assembly, part of the 30S ribosomal subunit. Forms a bridge to the 50S subunit in the 70S ribosome, contacting the 23S rRNA.

One of the primary rRNA binding proteins, it binds directly to 16S rRNA where it helps nucleate assembly of the platform of the 30S subunit by binding and bridging several RNA helices of the 16S rRNA. Its function is as follows. Forms an intersubunit bridge (bridge B4) with the 23S rRNA of the 50S subunit in the ribosome. The polypeptide is Small ribosomal subunit protein uS15 (Dictyoglomus thermophilum (strain ATCC 35947 / DSM 3960 / H-6-12)).